Reading from the N-terminus, the 945-residue chain is Splicing factor, suppressor of white-apricot homolog (945 aa).

2 disordered regions span residues 1 to 28 (MYGA…GTGT) and 157 to 190 (YYDP…PFIA). Basic and acidic residues-rich tracts occupy residues 9 to 21 (AKAE…KEEA) and 169 to 178 (PSKQREKSEA). The SURP motif 1 repeat unit spans residues 211–253 (IIERTANFVCKQGAQFEIMLKAKQARNSQFDFLRFDHYLNPYY). The tract at residues 269–298 (AESKSEEKKKSGPTSDNEEEDDEEDGSYLH) is disordered. At S283 the chain carries Phosphoserine. Over residues 284-294 (DNEEEDDEEDG) the composition is skewed to acidic residues. The residue at position 315 (K315) is an N6-acetyllysine. 2 disordered regions span residues 332 to 355 (KAQA…PSQV) and 403 to 438 (SSSP…STTT). The span at 335–352 (ADSSAPAPPTADGTPAQP) shows a compositional bias: low complexity. The segment covering 412–425 (VPPPPGTTPPPPPT) has biased composition (pro residues). Low complexity predominate over residues 426 to 438 (TAESSSGVTSTTT). Residues 458–498 (VIDKLAEYVARNGLKFETSVRAKNDQRFEFLQPWHQYNAYY) form an SURP motif 2 repeat. 3 disordered regions span residues 512 to 566 (GSTQ…TVDG), 589 to 680 (PLEK…QAER), and 714 to 921 (GVMP…VQSK). Residues 514 to 527 (TQAASTAEEAPTET) show a composition bias toward low complexity. Residues 528 to 540 (AVEESSEAGEDGA) are compositionally biased toward acidic residues. The span at 589 to 598 (PLEKNRVKLD) shows a compositional bias: basic and acidic residues. 2 positions are modified to phosphoserine: S601 and S621. A compositionally biased stretch (low complexity) spans 615–630 (SSVANPSPAAAPPSAV). Residues 632–686 (EEKKPQLTQEELEAKQAKQKLEDRLAAAAREKLAQASKESKEKQLQAERKRKAAL) adopt a coiled-coil conformation. T639 carries the phosphothreonine modification. Composition is skewed to basic and acidic residues over residues 643–679 (LEAK…LQAE) and 733–752 (KPPE…EERE). Basic residues-rich tracts occupy residues 753 to 787 (KKKK…KAKH) and 795 to 810 (TVRR…RRRA). A compositionally biased stretch (basic and acidic residues) spans 811 to 821 (HSPERRREDRS). Residues S829 and S831 each carry the phosphoserine modification. The span at 835-861 (SRKRTRSRSPHEKKKKRRSRSRTKAKA) shows a compositional bias: basic residues. Low complexity predominate over residues 871-894 (QAAQRPSAHSAHSASISPVESRGS). Residues 895–908 (SQERSRGVSQEKDG) are compositionally biased toward basic and acidic residues. 2 positions are modified to phosphoserine: S899 and S903. The segment covering 909 to 920 (QISSAIVSSVQS) has biased composition (low complexity).

The protein localises to the nucleus. Its function is as follows. Plays a role as an alternative splicing regulator. Regulate its own expression at the level of RNA processing. Also regulates the splicing of fibronectin and CD45 genes. May act, at least in part, by interaction with other R/S-containing splicing factors. Represses the splicing of MAPT/Tau exon 10. In Rattus norvegicus (Rat), this protein is Splicing factor, suppressor of white-apricot homolog (Sfswap).